A 234-amino-acid chain; its full sequence is Phosphoribosylaminoimidazole-succinocarboxamide synthase (234 aa).

Belongs to the SAICAR synthetase family.

It carries out the reaction 5-amino-1-(5-phospho-D-ribosyl)imidazole-4-carboxylate + L-aspartate + ATP = (2S)-2-[5-amino-1-(5-phospho-beta-D-ribosyl)imidazole-4-carboxamido]succinate + ADP + phosphate + 2 H(+). Its pathway is purine metabolism; IMP biosynthesis via de novo pathway; 5-amino-1-(5-phospho-D-ribosyl)imidazole-4-carboxamide from 5-amino-1-(5-phospho-D-ribosyl)imidazole-4-carboxylate: step 1/2. This is Phosphoribosylaminoimidazole-succinocarboxamide synthase from Streptococcus pyogenes serotype M3 (strain ATCC BAA-595 / MGAS315).